The primary structure comprises 70 residues: UPF0150 protein TM_1311 (70 aa).

The protein belongs to the UPF0150 family.

This chain is UPF0150 protein TM_1311, found in Thermotoga maritima (strain ATCC 43589 / DSM 3109 / JCM 10099 / NBRC 100826 / MSB8).